The primary structure comprises 348 residues: Putative [LysW]-L-2-aminoadipate/[LysW]-L-glutamate phosphate reductase (348 aa).

9–12 (SGYV) is an NADP(+) binding site. Residue Cys-149 is part of the active site. Asn-315 contributes to the NADP(+) binding site.

It belongs to the NAGSA dehydrogenase family. Type 1 subfamily. LysY sub-subfamily.

It is found in the cytoplasm. The catalysed reaction is [amino-group carrier protein]-C-terminal-N-(1-carboxy-5-oxopentan-1-yl)-L-glutamine + phosphate + NADP(+) = [amino-group carrier protein]-C-terminal-N-(1-carboxy-5-phosphooxy-5-oxopentan-1-yl)-L-glutamine + NADPH + H(+). The enzyme catalyses [amino-group carrier protein]-C-terminal-gamma-(L-glutamyl-5-semialdehyde)-L-glutamate + phosphate + NADP(+) = [amino-group carrier protein]-C-terminal-gamma-(5-phospho-L-glutamyl)-L-glutamate + NADPH + H(+). It functions in the pathway amino-acid biosynthesis; L-lysine biosynthesis via AAA pathway; L-lysine from L-alpha-aminoadipate (Thermus route): step 3/5. The protein operates within amino-acid biosynthesis; L-arginine biosynthesis. In terms of biological role, involved in both the arginine and lysine biosynthetic pathways. In Cenarchaeum symbiosum (strain A), this protein is Putative [LysW]-L-2-aminoadipate/[LysW]-L-glutamate phosphate reductase.